We begin with the raw amino-acid sequence, 555 residues long: Glutamate--tRNA ligase (555 aa).

Residues 100–110 carry the 'HIGH' region motif; the sequence is PNPSGPLHIGH.

The protein belongs to the class-I aminoacyl-tRNA synthetase family. Glutamate--tRNA ligase type 2 subfamily.

The protein resides in the cytoplasm. It catalyses the reaction tRNA(Glu) + L-glutamate + ATP = L-glutamyl-tRNA(Glu) + AMP + diphosphate. In terms of biological role, catalyzes the attachment of glutamate to tRNA(Glu) in a two-step reaction: glutamate is first activated by ATP to form Glu-AMP and then transferred to the acceptor end of tRNA(Glu). The protein is Glutamate--tRNA ligase of Methanococcus maripaludis (strain C7 / ATCC BAA-1331).